Here is a 401-residue protein sequence, read N- to C-terminus: Bone morphogenetic protein 4 (401 aa).

The signal sequence occupies residues 1–19 (MIPGNRMLMVILLSQVLLG). A propeptide spanning residues 20 to 287 (GTNYASLIPD…GHALTRRSKR (268 aa)) is cleaved from the precursor. 3 N-linked (GlcNAc...) asparagine glycosylation sites follow: Asn-141, Asn-204, and Asn-238. Positions 279-299 (HALTRRSKRSPKQQRPRKKNK) are disordered. A compositionally biased stretch (basic residues) spans 280–299 (ALTRRSKRSPKQQRPRKKNK). 3 disulfides stabilise this stretch: Cys-301–Cys-366, Cys-330–Cys-398, and Cys-334–Cys-400. Asn-343 and Asn-358 each carry an N-linked (GlcNAc...) asparagine glycan.

This sequence belongs to the TGF-beta family. As to quaternary structure, homodimer; disulfide-linked. Forms heterodimers with the TGF-beta family member derriere. Part of a complex consisting of twsg1 and chrd. Interacts with tsku.

The protein localises to the secreted. It localises to the extracellular space. It is found in the extracellular matrix. In terms of biological role, posterior-ventralizing factor in Xenopus mesoderm induction. Induces posteroventral mesoderm and counteracts dorsalizing signals such as activin. The sequence is that of Bone morphogenetic protein 4 (bmp4) from Xenopus laevis (African clawed frog).